A 455-amino-acid chain; its full sequence is Protein png1 (455 aa).

A disordered region spans residues 1–110 (MTDGRQQHTR…LPVFPSPPRD (110 aa)). Residues 38 to 53 (SLQEQSRSRSRTQSPS) are compositionally biased toward low complexity. Over residues 59-73 (HTPPHPSRAPPPPPT) the composition is skewed to pro residues. Residues 74 to 98 (GAHYPSSQSPSQQHQQHQLPASSSL) show a composition bias toward low complexity. Residues C199, C202, C231, and C236 each coordinate Zn(2+). Residues 408 to 455 (NLIPREQTSGRPGEQKTPASMQDTPVDWVAAQQMGPGQSGPDRSQDGR) are disordered.

Belongs to the transglutaminase-like superfamily. PNGase family.

This Aspergillus fumigatus (strain ATCC MYA-4609 / CBS 101355 / FGSC A1100 / Af293) (Neosartorya fumigata) protein is Protein png1 (png1).